The primary structure comprises 195 residues: Protein GrpE (195 aa).

Residues 1 to 14 (MQEPHDQEPIEKQK) show a composition bias toward basic and acidic residues. The segment at 1–45 (MQEPHDQEPIEKQKLPGMDDVLETEHSGTVAGNTERAGEDAAPSL) is disordered.

This sequence belongs to the GrpE family. As to quaternary structure, homodimer.

The protein localises to the cytoplasm. Functionally, participates actively in the response to hyperosmotic and heat shock by preventing the aggregation of stress-denatured proteins, in association with DnaK and GrpE. It is the nucleotide exchange factor for DnaK and may function as a thermosensor. Unfolded proteins bind initially to DnaJ; upon interaction with the DnaJ-bound protein, DnaK hydrolyzes its bound ATP, resulting in the formation of a stable complex. GrpE releases ADP from DnaK; ATP binding to DnaK triggers the release of the substrate protein, thus completing the reaction cycle. Several rounds of ATP-dependent interactions between DnaJ, DnaK and GrpE are required for fully efficient folding. In Nitrosomonas europaea (strain ATCC 19718 / CIP 103999 / KCTC 2705 / NBRC 14298), this protein is Protein GrpE.